The following is a 408-amino-acid chain: Putative mannan endo-1,4-beta-mannosidase P (408 aa).

Positions 1–23 (MKCLCFIVLLAIVIAQSYVGVEA) are cleaved as a signal peptide. A glycan (N-linked (GlcNAc...) asparagine) is linked at Asn73. Residues Trp85 and Asn201 each coordinate substrate. The active-site Proton donor is the Glu202. Glu322 serves as the catalytic Nucleophile. Trp364 provides a ligand contact to substrate.

It belongs to the glycosyl hydrolase 5 (cellulase A) family.

The protein resides in the secreted. It carries out the reaction Random hydrolysis of (1-&gt;4)-beta-D-mannosidic linkages in mannans, galactomannans and glucomannans.. In Arabidopsis thaliana (Mouse-ear cress), this protein is Putative mannan endo-1,4-beta-mannosidase P (MANP).